The chain runs to 95 residues: Progonadoliberin-1 (95 aa).

The signal sequence occupies residues 1–23 (MAPQTSNLWLLLVVMMVMSQGCC). Gln-24 carries the post-translational modification Pyrrolidone carboxylic acid. Gly-33 bears the Glycine amide mark.

It belongs to the GnRH family.

The protein resides in the secreted. In terms of biological role, stimulates the secretion of gonadotropins. The chain is Progonadoliberin-1 (gnrh1) from Pagrus major (Red sea bream).